Reading from the N-terminus, the 554-residue chain is Estrogen receptor beta (554 aa).

Positions 25–173 (TEIKNSPAGV…NPGSKKDAHF (149 aa)) are modulating. 2 NR C4-type zinc fingers span residues 174–194 (CAVC…CEGC) and 210–234 (CPAT…LRKC). The segment at residues 174-239 (CAVCSDYASG…RLRKCYEVGM (66 aa)) is a DNA-binding region (nuclear receptor). Positions 289–521 (SPEQFVLTLL…DLLLEMLNAH (233 aa)) constitute an NR LBD domain. A disordered region spans residues 529 to 554 (PLATHPEFGPLEQMEPGESLRKGEPQ).

The protein belongs to the nuclear hormone receptor family. NR3 subfamily. As to quaternary structure, binds DNA as a homodimer. Can form a heterodimer with ER-alpha. As to expression, brain, pituitary, skeletal muscle, liver, adrenal, kidney, intestine and ovary.

It localises to the nucleus. Binds estrogens with an affinity similar to that of ER-alpha, and activates expression of reporter genes containing estrogen response elements (ERE) in an estrogen-dependent manner. Locally synthesized estrogens may act via ER beta, in addition to ER alpha, to mediate seasonal or developmental effects on nearby song nuclei. This Sturnus vulgaris (Starling) protein is Estrogen receptor beta (ESR2).